A 219-amino-acid chain; its full sequence is Envelope protein US9 homolog (219 aa).

At methionine 1–threonine 193 the chain is on the intravirion side. The short motif at leucine 145 to leucine 146 is the Di-leucine internalization motif element. The tract at residues aspartate 153–glutamate 168 is acidic. 2 positions are modified to phosphoserine; by host CK2: serine 163 and serine 165. A helical; Signal-anchor for type II membrane protein transmembrane segment spans residues valine 194–leucine 214. Over alanine 215–proline 219 the chain is Virion surface.

The protein belongs to the alphaherpesvirinae envelope protein US9 family. In terms of processing, phosphorylated on serines within the acidic cluster. Phosphorylation determines whether endocytosed viral US9 traffics to the trans-Golgi network or recycles to the cell membrane.

It is found in the virion membrane. Its subcellular location is the host Golgi apparatus membrane. The protein resides in the host smooth endoplasmic reticulum membrane. It localises to the host cell membrane. Functionally, essential for the anterograde spread of the infection throughout the host nervous system. Together with the gE/gI heterodimer, US9 is involved in the sorting and transport of viral structural components toward axon tips. The sequence is that of Envelope protein US9 homolog from Equine herpesvirus 1 (strain Kentucky A) (EHV-1).